A 790-amino-acid polypeptide reads, in one-letter code: Transient receptor potential cation channel subfamily V member 3 (790 aa).

Over 1 to 430 the chain is Cytoplasmic; sequence MKAHPKEMVP…TLEPLHTLLH (430 aa). 3 disordered regions span residues 15–34, 52–71, and 76–112; these read RVAA…PAEI, PNPT…MDSN, and ISGN…KEEQ. Polar residues predominate over residues 95 to 105; that stretch reads ETPSNPNSPSA. 7 ANK repeats span residues 117–148, 170–198, 214–243, 261–291, 298–330, 340–362, and 398–420; these read RRLK…LCRR, TCLM…EEND, EGQT…DVNA, FGET…DITS, NILH…RSGN, DGLT…YILS, and TTDN…HEML. The helical transmembrane segment at 431 to 460 threads the bilayer; that stretch reads MKWKKFAKHMFFLSFCFYFFYNITLTLVSY. Residues 461–479 are Extracellular-facing; sequence YRPREEEAIPHPLALTHKM. The chain crosses the membrane as a helical span at residues 480–508; that stretch reads GWLQLLGRMFVLIWAMCISVKEGIAIFLL. Topologically, residues 509-519 are cytoplasmic; it reads RPSDLQSILSD. A helical membrane pass occupies residues 520–540; the sequence is AWFHFVFFIQAVLVILSVFLY. Over 541–545 the chain is Extracellular; the sequence is LFAYK. The chain crosses the membrane as a helical span at residues 546-566; that stretch reads EYLACLVLAMALGWANMLYYT. The Cytoplasmic segment spans residues 567–569; sequence RGF. The chain crosses the membrane as a helical span at residues 570–608; the sequence is QSMGMYSVMIQKVILHDVLKFLFVYIVFLLGFGVALASL. The Extracellular segment spans residues 609–620; that stretch reads IEKCPKDNKDCS. Positions 621 to 646 form an intramembrane region, pore-forming; that stretch reads SYGSFSDAVLELFKLTIGLGDLNIQQ. Position 638 (G638) interacts with Na(+). Topologically, residues 647–649 are extracellular; the sequence is NSK. The chain crosses the membrane as a helical span at residues 650–686; that stretch reads YPILFLFLLITYVILTFVLLLNMLIALMGETVENVSK. Residues 687 to 790 are Cytoplasmic-facing; sequence ESERIWRLQR…EVEEFPETSV (104 aa).

It belongs to the transient receptor (TC 1.A.4) family. TrpV subfamily. TRPV3 sub-subfamily. Homotetramer. May convert from a homotetramer to a homopentamer to allow pore dilation. Interacts with TRPV1; may form a heteromeric channel with TRPV1. Interacts with SNX11; this interaction promotes TRPV3 trafficking from the cell membrane to lysosome for degradation. As to expression, abundantly expressed in CNS. Widely expressed at low levels. Detected in dorsal root ganglion (at protein level). Expressed in the keratinocyte layers of the outer root sheath and, to lesser extent, to the matrix of the hair follicles (at protein level).

The protein resides in the cell membrane. It is found in the cytoplasm. The protein localises to the lysosome. It carries out the reaction Ca(2+)(in) = Ca(2+)(out). The enzyme catalyses Mg(2+)(in) = Mg(2+)(out). It catalyses the reaction Na(+)(in) = Na(+)(out). The catalysed reaction is K(+)(in) = K(+)(out). Its activity is regulated as follows. Activated by cannabinoid that binds to the vanilloid binding pocket. Diphenylboronic anhydride induces pore dilation and enhances cation permeability by promoting the conversion to a homopentamer. Functionally, non-selective calcium permeant cation channel. It is activated by innocuous (warm) temperatures and shows an increased response at noxious temperatures greater than 39 degrees Celsius. Activation exhibits an outward rectification. The channel pore can dilate to provide permeability to larger cations. May associate with TRPV1 and may modulate its activity. Is a negative regulator of hair growth and cycling: TRPV3-coupled signaling suppresses keratinocyte proliferation in hair follicles and induces apoptosis and premature hair follicle regression (catagen). This Homo sapiens (Human) protein is Transient receptor potential cation channel subfamily V member 3 (TRPV3).